Here is a 493-residue protein sequence, read N- to C-terminus: Insulinoma-associated protein 2 (493 aa).

A compositionally biased stretch (basic residues) spans 1 to 12; the sequence is MPRGFLVKRTKR. The interval 1–20 is SNAG domain; sequence MPRGFLVKRTKRSGSSYRAR. Residues 1–77 are disordered; that stretch reads MPRGFLVKRT…PGPSPARPAG (77 aa). Residues 203 to 223 form a C2H2-type 1; atypical zinc finger; that stretch reads FICQLCKHQYADPFALAQHRC. The segment at 231–253 adopts a C2H2-type 2 zinc-finger fold; it reads YRCPECDKVFSCPANLASHRRWH. Residues 248–310 form a disordered region; it reads SHRRWHKPRP…SGDGQHRDSA (63 aa). Positions 267 to 276 are enriched in pro residues; sequence PHAPLTPPDP. The segment covering 283–294 has biased composition (basic and acidic residues); it reads ENGRVPRTDDQH. C2H2-type zinc fingers lie at residues 354–376, 398–420, and 452–475; these read FVCP…LGTH, FACP…RLWH, and FSCK…NKCH.

As to expression, expressed in spleen, stomach, liver, kidney and testis. In the pancreas, expressed in islet cells, including insulin-producing beta-cells, but not in acinar cells (at protein level). In the brain, expressed in the neuronal cells of the cerebral cortex, the Purkinje cells of the cerebellum and the hippocampal region including CA1 and CA3 (at protein level).

The protein localises to the cytoplasm. The protein resides in the nucleus. Its function is as follows. May function as a growth suppressor or tumor suppressor in liver cells and in certain neurons. This is Insulinoma-associated protein 2 (Insm2) from Mus musculus (Mouse).